Consider the following 491-residue polypeptide: Proline-rich protein PRCC (491 aa).

Residues 1-100 are mediates interaction with MAD2L2; the sequence is MSLVAYASSD…PPPPGVSPAE (100 aa). Disordered stretches follow at residues 1–244, 260–313, and 432–454; these read MSLV…SPSA, ITQE…PAFQ, and EEKTMKSFSKKKGEQPTGQQRRK. Over residues 10-26 the composition is skewed to acidic residues; it reads DESEPDEAEPEPEEEEA. A compositionally biased stretch (low complexity) spans 40–49; the sequence is ASLPAPKGPA. A compositionally biased stretch (pro residues) spans 50–96; that stretch reads LLPPPPQMLAPAFPPPLLLPPPTGDPRLQPPPPLPFGLGGFPPPPGV. 6 positions are modified to phosphoserine: serine 97, serine 114, serine 157, serine 159, serine 212, and serine 218. The span at 111 to 120 shows a compositional bias: low complexity; it reads GLPSPRGPGL. Residues 230–244 are compositionally biased toward low complexity; that stretch reads APVVGTTTTTPSPSA. A Phosphothreonine modification is found at threonine 239. A phosphoserine mark is found at serine 241 and serine 267. Residues 262-272 are compositionally biased toward acidic residues; sequence QEEDDSDEEVA. A compositionally biased stretch (pro residues) spans 287 to 307; sequence GVEPYPYPIPTVPEELPPGTE.

In terms of assembly, interacts with MAD2L2; the interaction is direct. In terms of tissue distribution, ubiquitous in fetal and adult tissues.

The protein resides in the nucleus. Functionally, may regulate cell cycle progression through interaction with MAD2L2. The protein is Proline-rich protein PRCC (PRCC) of Homo sapiens (Human).